A 1651-amino-acid polypeptide reads, in one-letter code: Putative serine/threonine-protein kinase/receptor R818 (1651 aa).

The signal sequence occupies residues 1-19; sequence MKSIGIFVVALWLTHFCDG. 14 N-linked (GlcNAc...) asparagine; by host glycosylation sites follow: Asn111, Asn135, Asn190, Asn236, Asn275, Asn276, Asn287, Asn452, Asn455, Asn477, Asn495, Asn540, Asn596, and Asn722. Residues 749–769 form a helical membrane-spanning segment; the sequence is IILAIVIPVSFVICCIIIVLV. The 265-residue stretch at 793–1057 folds into the Protein kinase 1 domain; sequence LDFMESLGSG…EIMTKLSTLI (265 aa). ATP-binding positions include 799–807 and Lys820; that span reads LGSGGSGEV. The Proton acceptor role is filled by Asp915. The interval 1089–1115 is disordered; the sequence is IHNNDETKNSFGSTTYGSNTISSSSNT. Residues 1100–1115 show a composition bias toward low complexity; sequence GSTTYGSNTISSSSNT. Residues 1135 to 1278 enclose the Guanylate cyclase domain; the sequence is IIVFTDIISA…VTVNIAAKIT (144 aa). The Protein kinase 2 domain occupies 1394–1645; the sequence is IQIGKQIGVG…DVIMGLNDML (252 aa). ATP-binding positions include 1400–1408 and Lys1421; that span reads IGVGSYGIV. Catalysis depends on Asp1515, which acts as the Proton acceptor.

The protein localises to the membrane. It carries out the reaction L-seryl-[protein] + ATP = O-phospho-L-seryl-[protein] + ADP + H(+). The enzyme catalyses L-threonyl-[protein] + ATP = O-phospho-L-threonyl-[protein] + ADP + H(+). In Acanthamoeba polyphaga mimivirus (APMV), this protein is Putative serine/threonine-protein kinase/receptor R818.